We begin with the raw amino-acid sequence, 233 residues long: 2,3,4,5-tetrahydropyridine-2,6-dicarboxylate N-acetyltransferase (233 aa).

Belongs to the transferase hexapeptide repeat family. DapH subfamily.

It catalyses the reaction (S)-2,3,4,5-tetrahydrodipicolinate + acetyl-CoA + H2O = L-2-acetamido-6-oxoheptanedioate + CoA. The protein operates within amino-acid biosynthesis; L-lysine biosynthesis via DAP pathway; LL-2,6-diaminopimelate from (S)-tetrahydrodipicolinate (acetylase route): step 1/3. Functionally, catalyzes the transfer of an acetyl group from acetyl-CoA to tetrahydrodipicolinate. The sequence is that of 2,3,4,5-tetrahydropyridine-2,6-dicarboxylate N-acetyltransferase from Thermosipho africanus (strain TCF52B).